Consider the following 137-residue polypeptide: CUB domain-containing protein (137 aa).

The N-terminal stretch at 1 to 21 is a signal peptide; that stretch reads MRLSRAFAWPLLCSIATTVKA. 2 disulfides stabilise this stretch: Cys30-Cys51 and Cys75-Cys96. Positions 30–132 constitute a CUB domain; sequence CGGHYTDEYG…TFFEIYYFVD (103 aa).

In Homo sapiens (Human), this protein is CUB domain-containing protein.